A 110-amino-acid polypeptide reads, in one-letter code: MALWMRLLPLLVLLALWGPDPASAFVNQHLCGSHLVEALYLVCGERGFFYTPKTRREAEDLQVGQVELGGGPGAGSLQPLALEGSLQKRGIVEQCCTSICSLYQLENYCN.

A signal peptide spans 1 to 24 (MALWMRLLPLLVLLALWGPDPASA). 3 disulfide bridges follow: Cys-31–Cys-96, Cys-43–Cys-109, and Cys-95–Cys-100. Positions 57-87 (EAEDLQVGQVELGGGPGAGSLQPLALEGSLQ) are cleaved as a propeptide — c peptide.

The protein belongs to the insulin family. As to quaternary structure, heterodimer of a B chain and an A chain linked by two disulfide bonds.

The protein resides in the secreted. Its function is as follows. Insulin decreases blood glucose concentration. It increases cell permeability to monosaccharides, amino acids and fatty acids. It accelerates glycolysis, the pentose phosphate cycle, and glycogen synthesis in liver. The sequence is that of Insulin (INS) from Pan troglodytes (Chimpanzee).